A 295-amino-acid polypeptide reads, in one-letter code: Ethanolamine ammonia-lyase small subunit (295 aa).

Adenosylcob(III)alamin-binding residues include Val207, Glu228, and Cys258.

It belongs to the EutC family. In terms of assembly, the basic unit is a heterodimer which dimerizes to form tetramers. The heterotetramers trimerize; 6 large subunits form a core ring with 6 small subunits projecting outwards. Adenosylcob(III)alamin is required as a cofactor.

It localises to the bacterial microcompartment. The catalysed reaction is ethanolamine = acetaldehyde + NH4(+). It participates in amine and polyamine degradation; ethanolamine degradation. Catalyzes the deamination of various vicinal amino-alcohols to oxo compounds. Allows this organism to utilize ethanolamine as the sole source of nitrogen and carbon in the presence of external vitamin B12. The protein is Ethanolamine ammonia-lyase small subunit of Escherichia coli O139:H28 (strain E24377A / ETEC).